The sequence spans 485 residues: Adenosylhomocysteinase (485 aa).

The substrate site is built by T64, D139, and E205. 206–208 (TTT) contacts NAD(+). Residues K235 and D239 each contribute to the substrate site. Residues N240, 269 to 274 (GYGDVG), E292, N327, 348 to 350 (IGH), and N397 contribute to the NAD(+) site.

It belongs to the adenosylhomocysteinase family. It depends on NAD(+) as a cofactor.

It catalyses the reaction S-adenosyl-L-homocysteine + H2O = L-homocysteine + adenosine. It participates in amino-acid biosynthesis; L-homocysteine biosynthesis; L-homocysteine from S-adenosyl-L-homocysteine: step 1/1. Adenosylhomocysteine is a competitive inhibitor of S-adenosyl-L-methionine-dependent methyl transferase reactions; therefore adenosylhomocysteinase may play a key role in the control of methylations via regulation of the intracellular concentration of adenosylhomocysteine. In Lupinus luteus (European yellow lupine), this protein is Adenosylhomocysteinase (SAHH).